The primary structure comprises 99 residues: Transcriptional repressor PagR (99 aa).

In terms of domain architecture, HTH arsR-type spans 9–99 (IEYMSLEDDA…GIIKLLNPIQ (91 aa)). A DNA-binding region (H-T-H motif) is located at residues 43–62 (NVTQIIQILKLPQSTVSQHL).

Functionally, represses the expression of the pagA and atxA genes. This Bacillus anthracis protein is Transcriptional repressor PagR (pagR).